The sequence spans 802 residues: MTTTFEFLQPRIHGFATCCSSNSLLYSKASRFFNDRCRVYRQNPNRFVSNSITLPLQKKQVTVLRNHERFNLWDGFSRKKSRLVVNCQEDDQNESSSEEEESSQSTPAKSERKREKKEDKVWWSKGKKWQWQPIIQAQGIGVLLLQLSVVMFVMRLLRPGIPLPGSEPRIQTTFVSVPYSEFLSKVNSNQVQKVEVDGVQVLFKLRDDGKWQESETSRLSQSSESLLRTVAPTKRVVYSTTRPGDIKTPYEKMLGNNVEFGSPEKRSGGFFNSALIALFYIAVLAGLIRFPVSFSTSSTGQLRTRKAGGPDGGKVSGGGETITFADVAGVDEAKEELEEIVEFLRNPEKYVRLGARPPRGVLLVGLPGTGKTLLAKAVAGEAEVPFISCSASEFVELYVGMGASRVRDLFARAKKEAPSIIFIDEIDAVAKSRDGKFRMGSNDEREQTLNQLLTEMDGFDSNSAVIVLGATNRADVLDPALRRPGRFDRVVTVETPDKIGRESILRVHVSKKELPLGDDVNLGSIASMTTGFTGADLANLVNEAALLAGRKNKTNVEKIDFIQAVERSIAGIEKKSARLKGNEKAVVARHEAGHAVVGTAVANLLTGQPRVEKLSILPRTGGALGFTYIPPTSEDRYLLFIDELLGRLVTLLGGRAAEEVVYSGRISTGAFDDIRRATDMAYKAVAEYGLNQKIGPVSVATLSGGGIDDSGGSPWGRDQGKLVDLVQKEVTILLQSALDVALSVVRANPDVLEGLGAQLEEKEKVEGEELQKWLSMVVAPEELAVFVEGKQELLLPAQASSS.

Residues 1-55 (MTTTFEFLQPRIHGFATCCSSNSLLYSKASRFFNDRCRVYRQNPNRFVSNSITLP) constitute a chloroplast transit peptide. The interval 87–117 (CQEDDQNESSSEEEESSQSTPAKSERKREKK) is disordered. The segment covering 88–102 (QEDDQNESSSEEEES) has biased composition (acidic residues). The next 2 membrane-spanning stretches (helical) occupy residues 134-154 (IIQA…MFVM) and 268-288 (GGFF…AGLI). 365–372 (GLPGTGKT) lines the ATP pocket. H590 provides a ligand contact to Zn(2+). E591 is an active-site residue. Zn(2+) contacts are provided by H594 and D673.

It in the N-terminal section; belongs to the AAA ATPase family. In the C-terminal section; belongs to the peptidase M41 family. Zn(2+) serves as cofactor.

It is found in the plastid. Its subcellular location is the chloroplast thylakoid membrane. Probable ATP-dependent zinc metallopeptidase. This is ATP-dependent zinc metalloprotease FTSH 7, chloroplastic (FTSH7) from Arabidopsis thaliana (Mouse-ear cress).